We begin with the raw amino-acid sequence, 725 residues long: ATP-dependent DNA helicase II subunit 2 (725 aa).

Positions 232-478 (LTLGDPQKYP…QQAMSDYVDA (247 aa)) constitute a Ku domain.

This sequence belongs to the ku80 family. In terms of assembly, heterodimer of mus-51/ku70 and mus-52/ku80.

The protein localises to the nucleus. It is found in the chromosome. It localises to the telomere. The enzyme catalyses ATP + H2O = ADP + phosphate + H(+). Functionally, single-stranded DNA-dependent ATP-dependent helicase. Involved in non-homologous end joining (NHEJ) DNA double strand break repair. DNA-binding is sequence-independent but has a high affinity to nicks in double-stranded DNA and to the ends of duplex DNA. Binds to naturally occurring chromosomal ends, and therefore provides chromosomal end protection. Required also for telomere recombination to repair telomeric ends in the absence of telomerase. ku70, of the ku70/ku80 heterodimer, binds to the stem loop of tlc1, the RNA component of telomerase. Involved in telomere maintenance. Interacts with telomeric repeats and subtelomeric sequences thereby controlling telomere length and protecting against subtelomeric rearrangement. Maintains telomeric chromatin, which is involved in silencing the expression of genes located at the telomere. Required for mating-type switching. This is ATP-dependent DNA helicase II subunit 2 (mus-52) from Neurospora crassa (strain ATCC 24698 / 74-OR23-1A / CBS 708.71 / DSM 1257 / FGSC 987).